The chain runs to 437 residues: Enolase superfamily member DDB_G0284701 (437 aa).

Residue Lys-217 is the Proton acceptor of the active site. The Mn(2+) site is built by Asp-251, Glu-279, and Asp-321. Asp-395 (proton donor) is an active-site residue.

Belongs to the mandelate racemase/muconate lactonizing enzyme family.

This chain is Enolase superfamily member DDB_G0284701, found in Dictyostelium discoideum (Social amoeba).